The following is a 107-amino-acid chain: Large ribosomal subunit protein P2 (107 aa).

The segment at 86–107 (PAAAAAEAEEEDDDDMGFGLFD) is disordered. Residues 92–101 (EAEEEDDDDM) show a composition bias toward acidic residues.

This sequence belongs to the eukaryotic ribosomal protein P1/P2 family. In terms of assembly, P1 and P2 exist as dimers at the large ribosomal subunit. Post-translationally, phosphorylated.

Plays an important role in the elongation step of protein synthesis. In Trypanosoma brucei brucei, this protein is Large ribosomal subunit protein P2.